We begin with the raw amino-acid sequence, 366 residues long: Putative integrase/recombinase HI_1572 (366 aa).

The 80-residue stretch at 54-133 (ITLDELIDKY…SLSALMAKTI (80 aa)) folds into the Core-binding (CB) domain. Residues 168–331 (IFVSGYDVEH…DMAEGYKTKA (164 aa)) form the Tyr recombinase domain. Active-site residues include arginine 201, lysine 226, and histidine 308. Tyrosine 318 functions as the O-(3'-phospho-DNA)-tyrosine intermediate in the catalytic mechanism.

It belongs to the 'phage' integrase family.

The protein is Putative integrase/recombinase HI_1572 of Haemophilus influenzae (strain ATCC 51907 / DSM 11121 / KW20 / Rd).